The chain runs to 377 residues: 3-dehydroquinate synthase (377 aa).

NAD(+) contacts are provided by residues 113–117 (GVIGD), 137–138 (TT), K150, and K159. The Zn(2+) site is built by E192, H254, and H273.

This sequence belongs to the sugar phosphate cyclases superfamily. Dehydroquinate synthase family. It depends on Co(2+) as a cofactor. Zn(2+) serves as cofactor. NAD(+) is required as a cofactor.

The protein resides in the cytoplasm. It catalyses the reaction 7-phospho-2-dehydro-3-deoxy-D-arabino-heptonate = 3-dehydroquinate + phosphate. It functions in the pathway metabolic intermediate biosynthesis; chorismate biosynthesis; chorismate from D-erythrose 4-phosphate and phosphoenolpyruvate: step 2/7. Its function is as follows. Catalyzes the conversion of 3-deoxy-D-arabino-heptulosonate 7-phosphate (DAHP) to dehydroquinate (DHQ). In Bartonella bacilliformis (strain ATCC 35685 / KC583 / Herrer 020/F12,63), this protein is 3-dehydroquinate synthase.